The primary structure comprises 236 residues: Alpha-acetolactate decarboxylase (236 aa).

This sequence belongs to the alpha-acetolactate decarboxylase family.

It catalyses the reaction (2S)-2-acetolactate + H(+) = (R)-acetoin + CO2. It functions in the pathway polyol metabolism; (R,R)-butane-2,3-diol biosynthesis; (R,R)-butane-2,3-diol from pyruvate: step 2/3. In terms of biological role, converts acetolactate into acetoin. The sequence is that of Alpha-acetolactate decarboxylase (aldB) from Lactococcus lactis subsp. cremoris (strain MG1363).